A 557-amino-acid polypeptide reads, in one-letter code: Arginine--tRNA ligase (557 aa).

A 'HIGH' region motif is present at residues 132-142 (ANPTGNLHLGH).

The protein belongs to the class-I aminoacyl-tRNA synthetase family. As to quaternary structure, monomer.

The protein localises to the cytoplasm. It catalyses the reaction tRNA(Arg) + L-arginine + ATP = L-arginyl-tRNA(Arg) + AMP + diphosphate. The chain is Arginine--tRNA ligase from Geobacillus thermodenitrificans (strain NG80-2).